Reading from the N-terminus, the 332-residue chain is Ketol-acid reductoisomerase (NADP(+)) (332 aa).

One can recognise a KARI N-terminal Rossmann domain in the interval 1 to 182 (MAQTWKDTDI…GSARAGLIKT (182 aa)). NADP(+) is bound by residues 25–28 (YGIQ), Lys48, Ser53, and 83–86 (DMIQ). The active site involves His108. NADP(+) is bound at residue Gly134. Positions 183 to 329 (AFKEEVETDW…KEMRKMMWPD (147 aa)) constitute a KARI C-terminal knotted domain. Positions 191, 195, 227, and 231 each coordinate Mg(2+). Ser252 lines the substrate pocket.

It belongs to the ketol-acid reductoisomerase family. Mg(2+) is required as a cofactor.

The catalysed reaction is (2R)-2,3-dihydroxy-3-methylbutanoate + NADP(+) = (2S)-2-acetolactate + NADPH + H(+). The enzyme catalyses (2R,3R)-2,3-dihydroxy-3-methylpentanoate + NADP(+) = (S)-2-ethyl-2-hydroxy-3-oxobutanoate + NADPH + H(+). Its pathway is amino-acid biosynthesis; L-isoleucine biosynthesis; L-isoleucine from 2-oxobutanoate: step 2/4. It functions in the pathway amino-acid biosynthesis; L-valine biosynthesis; L-valine from pyruvate: step 2/4. Functionally, involved in the biosynthesis of branched-chain amino acids (BCAA). Catalyzes an alkyl-migration followed by a ketol-acid reduction of (S)-2-acetolactate (S2AL) to yield (R)-2,3-dihydroxy-isovalerate. In the isomerase reaction, S2AL is rearranged via a Mg-dependent methyl migration to produce 3-hydroxy-3-methyl-2-ketobutyrate (HMKB). In the reductase reaction, this 2-ketoacid undergoes a metal-dependent reduction by NADPH to yield (R)-2,3-dihydroxy-isovalerate. This chain is Ketol-acid reductoisomerase (NADP(+)), found in Nitrosopumilus maritimus (strain SCM1).